Consider the following 1061-residue polypeptide: TonB-dependent transporter Oar (1061 aa).

A signal peptide spans M1–A26. A TBDR plug domain is found at E121–R243. Residues E248–F1061 form the TBDR beta-barrel domain. The segment at R701–Q722 is disordered. Residues G709–Q722 are compositionally biased toward polar residues.

It belongs to the TonB-dependent receptor family. Interacts with TonB. Part of a transport system composed of the outer membrane transporter Oar, the trans-periplasmic binding protein TonB and the inner membrane proteins ExbB and ExbD.

It localises to the cell outer membrane. In terms of biological role, required for secretion of the protease PopC across the bacterial outer membrane. Binds and probably transports PopC from the periplasm to the extracellular milieu. It derives its energy for transport by interacting with the trans-periplasmic membrane protein TonB. Required for cellular adhesion during fruiting body formation, a multicellular developmental program that is induced in response to starvation. The polypeptide is TonB-dependent transporter Oar (Myxococcus xanthus).